We begin with the raw amino-acid sequence, 106 residues long: CLAVATA3/ESR (CLE)-related protein 21 (106 aa).

The signal sequence occupies residues 1 to 31 (MLILSSRYAMKRDVLIIVIFTVLVLIIISRS). Asn-47 is a glycosylation site (N-linked (GlcNAc...) asparagine). Positions 72-82 (KVRRRSSRFRR) are enriched in basic residues. Residues 72-106 (KVRRRSSRFRRKTDGDEEEEEKRSIPTGPNPLHNK) are disordered. Pro-97 and Pro-100 each carry hydroxyproline. Pro-100 carries O-linked (Ara...) hydroxyproline glycosylation.

The protein belongs to the CLV3/ESR signal peptide family. The O-glycosylation (arabinosylation) of the hydroxyproline Pro-100 enhances binding affinity of the CLE21p peptide for its receptor. Mostly expressed in leaves and apex, and, to a lower extent, in seedlings, flowers, stems and siliques.

It localises to the secreted. It is found in the extracellular space. In terms of biological role, extracellular signal peptide that regulates cell fate. Represses root apical meristem maintenance. Regulates the transition of protophloem cells from proliferation to differentiation, thus impinging on postembryonic growth capacity of the root meristem; this signaling pathway requires CRN and CLV2. The chain is CLAVATA3/ESR (CLE)-related protein 21 from Arabidopsis thaliana (Mouse-ear cress).